The chain runs to 482 residues: F-box/LRR-repeat protein At3g58930 (482 aa).

The F-box domain maps to 1–47; it reads MDRVSNLPDGVRGHILSFLPAKHIALTSVLSKSWLNLWKLIPILDID. LRR repeat units lie at residues 122–150, 175–200, 222–248, 313–344, and 345–370; these read SYED…KIRN, SDLI…RMAS, GTGC…NYSD, ILYL…GIKS, and EEGR…IIEG.

The polypeptide is F-box/LRR-repeat protein At3g58930 (Arabidopsis thaliana (Mouse-ear cress)).